The primary structure comprises 225 residues: Glutathione S-transferase Mu 5 (225 aa).

Residues Lys5–Gly92 enclose the GST N-terminal domain. Phosphoserine is present on Ser6. Glutathione-binding positions include Tyr11–Trp12, Trp50–Lys54, Asn63–Leu64, and Gln76–Ser77. Positions Thr94–Ile212 constitute a GST C-terminal domain. Tyr120 serves as a coordination point for substrate.

It belongs to the GST superfamily. Mu family. Homodimer. Post-translationally, the N-terminus is blocked. As to expression, expressed in testis and brain. Very low expression in liver, kidney, heart and lung.

The protein localises to the cytoplasm. It carries out the reaction RX + glutathione = an S-substituted glutathione + a halide anion + H(+). Conjugation of reduced glutathione to a wide number of exogenous and endogenous hydrophobic electrophiles. In Rattus norvegicus (Rat), this protein is Glutathione S-transferase Mu 5 (Gstm5).